Reading from the N-terminus, the 441-residue chain is ATP-dependent RNA helicase sub2 (441 aa).

Over residues 19–29 (DAAATTAAPAA) the composition is skewed to low complexity. Residues 19–43 (DAAATTAAPAANGAQDKKGDLTVSG) are disordered. The Q motif signature appears at 58 to 86 (TGFRDFLLKGELLRAITDCGFEHPSEVQQ). A Helicase ATP-binding domain is found at 89–264 (IPTAILNVDV…KKFMRNPLEV (176 aa)). 102 to 109 (AKSGLGKT) serves as a coordination point for ATP. Residues 211–214 (DECD) carry the DEAD box motif. A Helicase C-terminal domain is found at 276–437 (GLQQYYIKLS…EYPEGGVDSS (162 aa)).

This sequence belongs to the DEAD box helicase family. DECD subfamily.

The protein resides in the nucleus. It catalyses the reaction ATP + H2O = ADP + phosphate + H(+). Its function is as follows. ATP-binding RNA helicase involved in transcription elongation and required for the export of mRNA out of the nucleus. SUB2 also plays a role in pre-mRNA splicing and spliceosome assembly. May be involved in rDNA and telomeric silencing, and maintenance of genome integrity. The polypeptide is ATP-dependent RNA helicase sub2 (sub2) (Aspergillus clavatus (strain ATCC 1007 / CBS 513.65 / DSM 816 / NCTC 3887 / NRRL 1 / QM 1276 / 107)).